The following is a 111-amino-acid chain: Ribosome-binding factor A (111 aa).

It belongs to the RbfA family. Monomer. Binds 30S ribosomal subunits, but not 50S ribosomal subunits or 70S ribosomes.

It localises to the cytoplasm. Functionally, one of several proteins that assist in the late maturation steps of the functional core of the 30S ribosomal subunit. Associates with free 30S ribosomal subunits (but not with 30S subunits that are part of 70S ribosomes or polysomes). Required for efficient processing of 16S rRNA. May interact with the 5'-terminal helix region of 16S rRNA. This is Ribosome-binding factor A from Helicobacter pylori (strain Shi470).